The following is a 745-amino-acid chain: Cellulose synthase 1 catalytic subunit [UDP-forming] (745 aa).

Helical transmembrane passes span 29–49, 106–126, and 153–173; these read YVVG…TLSL, GILG…LFLS, and IFIP…LGAL. Residues 147 to 240 form a catalytic subdomain A region; sequence EWPTVDIFIP…HILILDCDHI (94 aa). Residue Asp-189 is part of the active site. Positions 236 and 238 each coordinate substrate. The catalytic subdomain B stretch occupies residues 317–377; it reads KAIEEIGGFA…GQRMRWARGM (61 aa). The active site involves Asp-333. A run of 6 helical transmembrane segments spans residues 407–427, 430–450, 468–488, 515–535, 547–567, and 649–669; these read FFFA…LFFS, IIAA…FHSI, VYET…MLFP, NIIF…ALIF, ALNC…ISVG, and AVFT…RFVF. In terms of domain architecture, PilZ spans 572 to 670; it reads QLRQSHRIEA…EAAVVRFVFG (99 aa). The span at 708 to 717 shows a compositional bias: basic residues; the sequence is IAHSRPKKKP. Positions 708-745 are disordered; the sequence is IAHSRPKKKPIALPVERREPTTSQGGQKQEGKISRAAS. Residues 736–745 show a composition bias toward basic and acidic residues; sequence QEGKISRAAS.

The protein belongs to the glycosyltransferase 2 family. The cofactor is Mg(2+).

It is found in the cell inner membrane. The catalysed reaction is [(1-&gt;4)-beta-D-glucosyl](n) + UDP-alpha-D-glucose = [(1-&gt;4)-beta-D-glucosyl](n+1) + UDP + H(+). It participates in glycan metabolism; bacterial cellulose biosynthesis. Activated by bis-(3'-5') cyclic diguanylic acid (c-di-GMP). Functionally, catalytic subunit of cellulose synthase. It polymerizes uridine 5'-diphosphate glucose to cellulose. The thick cellulosic mats generated by this enzyme probably provide a specialized protective environment to the bacterium. This Komagataeibacter xylinus (Gluconacetobacter xylinus) protein is Cellulose synthase 1 catalytic subunit [UDP-forming] (bcsAI).